The following is a 61-amino-acid chain: Bacteriocin leucocin-B (61 aa).

The propeptide occupies 1–24; that stretch reads MNNMKSADNYQQLDNNALEQVVGG. The cysteines at positions 33 and 38 are disulfide-linked.

Belongs to the bacteriocin class IIA/YGNGV family.

It localises to the secreted. In terms of biological role, active against L.monocytogenes and several lactic acid bacteria. The protein is Bacteriocin leucocin-B of Leuconostoc carnosum.